The chain runs to 183 residues: Segregation and condensation protein B (183 aa).

The protein belongs to the ScpB family. As to quaternary structure, homodimer. Homodimerization may be required to stabilize the binding of ScpA to the Smc head domains. Component of a cohesin-like complex composed of ScpA, ScpB and the Smc homodimer, in which ScpA and ScpB bind to the head domain of Smc. The presence of the three proteins is required for the association of the complex with DNA.

The protein resides in the cytoplasm. Its function is as follows. Participates in chromosomal partition during cell division. May act via the formation of a condensin-like complex containing Smc and ScpA that pull DNA away from mid-cell into both cell halves. The protein is Segregation and condensation protein B of Streptococcus pyogenes serotype M1.